We begin with the raw amino-acid sequence, 77 residues long: Putative antitoxin VapB3 (77 aa).

The stretch at 10 to 60 (RRGLKKELEELGINYAEAVRKFLEELVARERRRRALERARALREELRKKGA) forms a coiled coil.

As to quaternary structure, forms a complex with putative toxin VapC3, possibly VapB(2)-VapC(2).

In terms of biological role, antitoxin component of a type II toxin-antitoxin (TA) system. This Pyrobaculum aerophilum (strain ATCC 51768 / DSM 7523 / JCM 9630 / CIP 104966 / NBRC 100827 / IM2) protein is Putative antitoxin VapB3 (vAPb3).